The sequence spans 110 residues: MFGGKGGLGNLMKQAQQMQEKMQKMQEEIAQLEVTGESGAGLVKVTINGAHNCRRVEIDPSLLEDDKEMLEDLVAAAFNDAARRIEETQKEKMASVSSGMQLPPGFKMPF.

The interval 89 to 110 (QKEKMASVSSGMQLPPGFKMPF) is disordered.

Belongs to the YbaB/EbfC family. As to quaternary structure, homodimer.

It is found in the cytoplasm. The protein localises to the nucleoid. Binds to DNA and alters its conformation. May be involved in regulation of gene expression, nucleoid organization and DNA protection. This Cronobacter sakazakii (strain ATCC BAA-894) (Enterobacter sakazakii) protein is Nucleoid-associated protein ESA_02800.